An 871-amino-acid chain; its full sequence is DNA mismatch repair protein MutS (871 aa).

Position 616–623 (616–623 (GPNMAGKS)) interacts with ATP. A disordered region spans residues 801–825 (ETEKTEESMEGTNLPKKKKEEKTSS).

The protein belongs to the DNA mismatch repair MutS family.

Its function is as follows. This protein is involved in the repair of mismatches in DNA. It is possible that it carries out the mismatch recognition step. This protein has a weak ATPase activity. This Clostridium kluyveri (strain NBRC 12016) protein is DNA mismatch repair protein MutS.